A 344-amino-acid chain; its full sequence is Mycothiol acetyltransferase (344 aa).

Glutamate 36 contacts 1D-myo-inositol 2-(L-cysteinylamino)-2-deoxy-alpha-D-glucopyranoside. 2 consecutive N-acetyltransferase domains span residues 40 to 179 (LALR…TPLP) and 187 to 344 (VTVR…PSTG). The segment at 61-83 (ADTSGPNVPDTPGDQNAADTSTM) is disordered. Residues 73–83 (GDQNAADTSTM) are compositionally biased toward polar residues. Residue 109 to 111 (VVV) coordinates acetyl-CoA. The 1D-myo-inositol 2-(L-cysteinylamino)-2-deoxy-alpha-D-glucopyranoside site is built by glutamate 214, lysine 253, and glutamate 272. Residues 276 to 278 (VGV) and 283 to 289 (GGAGLGR) each bind acetyl-CoA. Tyrosine 310 serves as a coordination point for 1D-myo-inositol 2-(L-cysteinylamino)-2-deoxy-alpha-D-glucopyranoside. 315-320 (NVRAVR) lines the acetyl-CoA pocket.

This sequence belongs to the acetyltransferase family. MshD subfamily. In terms of assembly, monomer.

The enzyme catalyses 1D-myo-inositol 2-(L-cysteinylamino)-2-deoxy-alpha-D-glucopyranoside + acetyl-CoA = mycothiol + CoA + H(+). Its function is as follows. Catalyzes the transfer of acetyl from acetyl-CoA to desacetylmycothiol (Cys-GlcN-Ins) to form mycothiol. The sequence is that of Mycothiol acetyltransferase from Frankia casuarinae (strain DSM 45818 / CECT 9043 / HFP020203 / CcI3).